We begin with the raw amino-acid sequence, 158 residues long: Low molecular weight phosphotyrosine protein phosphatase (158 aa).

A2 carries the N-acetylalanine modification. Residue C13 is the Nucleophile of the active site. R19 is a catalytic residue. The active-site Proton donor is D130. A phosphotyrosine mark is found at Y132 and Y133.

The protein belongs to the low molecular weight phosphotyrosine protein phosphatase family. In terms of assembly, interacts with EPHA2; dephosphorylates EPHA2. Interacts with EPHB1. Interacts with the SH3 domain of SPTAN1. There is no interaction observed for isoform 2. In terms of processing, phosphorylated by LCK. Phosphorylation at Tyr-132 increases its phosphatase activity. In terms of tissue distribution, widely expressed with highest levels in brain and liver and lowest levels in muscle.

The protein localises to the cytoplasm. The enzyme catalyses O-phospho-L-tyrosyl-[protein] + H2O = L-tyrosyl-[protein] + phosphate. It catalyses the reaction a phosphate monoester + H2O = an alcohol + phosphate. With respect to regulation, inhibited by sulfhydryl reagents. Functionally, acts on tyrosine phosphorylated proteins, low-MW aryl phosphates and natural and synthetic acyl phosphates with differences in substrate specificity between isoform 1 and isoform 2. This Mus musculus (Mouse) protein is Low molecular weight phosphotyrosine protein phosphatase.